The following is a 497-amino-acid chain: Probable malate:quinone oxidoreductase (497 aa).

This sequence belongs to the MQO family. It depends on FAD as a cofactor.

The catalysed reaction is (S)-malate + a quinone = a quinol + oxaloacetate. Its pathway is carbohydrate metabolism; tricarboxylic acid cycle; oxaloacetate from (S)-malate (quinone route): step 1/1. This is Probable malate:quinone oxidoreductase from Tolumonas auensis (strain DSM 9187 / NBRC 110442 / TA 4).